Here is a 196-residue protein sequence, read N- to C-terminus: DnaA initiator-associating protein DiaA (196 aa).

The region spanning 34 to 196 (LVQSLLNGNK…DNTLFPHQDD (163 aa)) is the SIS domain.

This sequence belongs to the SIS family. DiaA subfamily. In terms of assembly, homotetramer; dimer of dimers.

Functionally, required for the timely initiation of chromosomal replication via direct interactions with the DnaA initiator protein. This is DnaA initiator-associating protein DiaA from Shigella flexneri serotype 5b (strain 8401).